The primary structure comprises 245 residues: Thymidylate kinase (245 aa).

An ATP-binding site is contributed by 55-62 (GIDGVGKS).

It belongs to the thymidylate kinase family.

It carries out the reaction dTMP + ATP = dTDP + ADP. Its function is as follows. Phosphorylation of dTMP to form dTDP in both de novo and salvage pathways of dTTP synthesis. The protein is Thymidylate kinase of Rhodopirellula baltica (strain DSM 10527 / NCIMB 13988 / SH1).